The primary structure comprises 140 residues: Nucleoside diphosphate kinase (140 aa).

Lysine 11, phenylalanine 59, arginine 87, threonine 93, arginine 104, and asparagine 114 together coordinate ATP. Histidine 117 serves as the catalytic Pros-phosphohistidine intermediate.

It belongs to the NDK family. Homotetramer. The cofactor is Mg(2+).

Its subcellular location is the cytoplasm. It catalyses the reaction a 2'-deoxyribonucleoside 5'-diphosphate + ATP = a 2'-deoxyribonucleoside 5'-triphosphate + ADP. It carries out the reaction a ribonucleoside 5'-diphosphate + ATP = a ribonucleoside 5'-triphosphate + ADP. In terms of biological role, major role in the synthesis of nucleoside triphosphates other than ATP. The ATP gamma phosphate is transferred to the NDP beta phosphate via a ping-pong mechanism, using a phosphorylated active-site intermediate. The chain is Nucleoside diphosphate kinase from Rickettsia peacockii (strain Rustic).